Reading from the N-terminus, the 273-residue chain is Transposable element Tcb1 transposase (273 aa).

The protein belongs to the transposase 5 family.

It localises to the nucleus. Probably essential for transposable element Tcb1 transposition. The insertion of Tcb1 is the main cause of spontaneous mutations. The polypeptide is Transposable element Tcb1 transposase (Caenorhabditis briggsae).